A 250-amino-acid chain; its full sequence is Triosephosphate isomerase, cytosolic (250 aa).

Residues Asn-1 and Lys-3 each contribute to the substrate site. The Electrophile role is filled by His-87. Catalysis depends on Glu-160, which acts as the Proton acceptor.

It belongs to the triosephosphate isomerase family. In terms of assembly, homodimer.

Its subcellular location is the cytoplasm. It catalyses the reaction D-glyceraldehyde 3-phosphate = dihydroxyacetone phosphate. Its pathway is carbohydrate biosynthesis; gluconeogenesis. It functions in the pathway carbohydrate degradation; glycolysis; D-glyceraldehyde 3-phosphate from glycerone phosphate: step 1/1. The sequence is that of Triosephosphate isomerase, cytosolic (TPI1) from Gracilaria gracilis (Red alga).